The chain runs to 460 residues: MEAARCAPGPRGDSAFDDETLRLRQLKLDNQRALLEKKQRKKRLEPLMVQPNPEARLRRLKPRGSEEHTPLVDPQMPRSDVILHGIDGPAAFLKPEAQDLESKPQVLSVGSPAPEEGTEGSADGESPEETAPKPDLQEILQKHGILSSVNYDEEPDKEEDEGGNLSSPSARSEESAAASQKAASETGASGVTAQQGDAQLGEVENLEDFAYSPAPRGVTVKCKVTRDKKGMDRGLFPTYYMHLEREENRKIFLLAGRKRKKSKTSNYLVSTDPTDLSREGESYIGKLRSNLMGTKFTVYDHGVNPVKAQGLVEKAHTRQELAAICYETNVLGFKGPRKMSVIIPGMNMNHERIPFRPRNEHESLLSKWQNKSMENLIELHNKAPVWNDDTQSYVLNFHGRVTQASVKNFQIVHGNDPDYIVMQFGRVADDVFTLDYNYPLCALQAFAIGLSSFDSKLACE.

2 disordered regions span residues Lys-37–Pro-132 and Tyr-151–Ala-193. Over residues Tyr-151 to Gly-162 the composition is skewed to acidic residues. Over residues Ser-166–Ala-188 the composition is skewed to low complexity.

Belongs to the TUB family. As to quaternary structure, associates with the IFT complex A (IFT-A). Interacts with SIRT1. Widely expressed including eyes and adipose depots.

The protein resides in the nucleus. The protein localises to the cell membrane. It localises to the cell projection. Its subcellular location is the cilium. It is found in the cytoplasm. The protein resides in the secreted. Negative regulator of the Shh signaling transduction pathway: recruited to primary cilia via association with the IFT complex A (IFT-A) and is required for recruitment of G protein-coupled receptor GPR161 to cilia, a promoter of PKA-dependent basal repression machinery in Shh signaling. Binds to phosphorylated inositide (phosphoinositide) lipids. Both IFT-A- and phosphoinositide-binding properties are required to regulate ciliary G protein-coupled receptor trafficking. During adipogenesis, regulates ciliary trafficking of FFAR4 in preadipocytes. The sequence is that of Tubby-related protein 3 from Mus musculus (Mouse).